The primary structure comprises 212 residues: 7-carboxy-7-deazaguanine synthase (212 aa).

Substrate contacts are provided by residues 22–24 (LQG) and Arg37. The Radical SAM core domain maps to 28 to 212 (NTGMPAVFVR…VQTHKWAGIE (185 aa)). Residues Cys41, Cys45, and Cys48 each contribute to the [4Fe-4S] cluster site. Thr50 provides a ligand contact to Mg(2+). Thr78 contacts substrate. S-adenosyl-L-methionine-binding positions include Gly80 and 122 to 124 (SPK).

The protein belongs to the radical SAM superfamily. 7-carboxy-7-deazaguanine synthase family. In terms of assembly, homodimer. The cofactor is [4Fe-4S] cluster. It depends on S-adenosyl-L-methionine as a cofactor. Mg(2+) serves as cofactor.

The catalysed reaction is 6-carboxy-5,6,7,8-tetrahydropterin + H(+) = 7-carboxy-7-deazaguanine + NH4(+). It participates in purine metabolism; 7-cyano-7-deazaguanine biosynthesis. Its function is as follows. Catalyzes the complex heterocyclic radical-mediated conversion of 6-carboxy-5,6,7,8-tetrahydropterin (CPH4) to 7-carboxy-7-deazaguanine (CDG), a step common to the biosynthetic pathways of all 7-deazapurine-containing compounds. In Neisseria meningitidis serogroup B (strain ATCC BAA-335 / MC58), this protein is 7-carboxy-7-deazaguanine synthase.